Reading from the N-terminus, the 183-residue chain is Protein jagunal homolog 1 (183 aa).

Residues 1–39 (MASRAGPRAAGTDGSDFQHRERVAMHYQMSVTLKYEIKK) lie on the Cytoplasmic side of the membrane. Ser3 carries the phosphoserine modification. Residues 40–60 (LIYVHLVIWLLLVAKMSVGHL) traverse the membrane as a helical segment. The Lumenal portion of the chain corresponds to 61–71 (RLLSHDQVAMP). Residues 72-92 (YQWEYPYLLSIVPSVLGLLSF) traverse the membrane as a helical segment. At 93–96 (PRNN) the chain is on the cytoplasmic side. A helical transmembrane segment spans residues 97–117 (ISYLVLSMISMGLFSIAPLIY). Topologically, residues 118–137 (GSMEMFPAAQQLYRHGKAYR) are lumenal. The helical transmembrane segment at 138–158 (FLFGFSAVSVMYLVLVLAVQV) threads the bilayer. The Cytoplasmic segment spans residues 159–183 (HAWQLYYSKKLLDSWFTSTQEKKRK).

It belongs to the jagunal family. Interacts with COPA, COPB2 and COPG2.

It is found in the endoplasmic reticulum membrane. In terms of biological role, endoplasmic reticulum transmembrane protein involved in vesicle-mediated transport, which is required for neutrophil function. Required for vesicle-mediated transport; it is however unclear whether it is involved in early secretory pathway or intracellular protein transport. Acts as a regulator of neutrophil function, probably via its role in vesicle-mediated transport: required for defense against fungal pathogens and for granulocyte colony-stimulating factor (GM-CSF) signaling pathway; possibly by regulating glycosylation and/or targeting of proteins contributing to the viability and migration of neutrophils. The protein is Protein jagunal homolog 1 of Mus musculus (Mouse).